The sequence spans 195 residues: Ubiquitin-conjugating enzyme E2 T (195 aa).

The UBC core domain maps to 2-152 (QRTSRLKREL…ARQWTEKHAR (151 aa)). The Glycyl thioester intermediate role is filled by Cys-86. Residue Lys-91 forms a Glycyl lysine isopeptide (Lys-Gly) (interchain with G-Cter in ubiquitin) linkage. Over residues 146 to 157 (WTEKHARQKTDE) the composition is skewed to basic and acidic residues. Positions 146 to 195 (WTEKHARQKTDEEGMPGSLPEVGGSEGPSAAQKRKAGQLSSGGKRFCPDV) are disordered. Residue Lys-180 forms a Glycyl lysine isopeptide (Lys-Gly) (interchain with G-Cter in ubiquitin) linkage. Lys-189 is covalently cross-linked (Glycyl lysine isopeptide (Lys-Gly) (interchain with G-Cter in SUMO2)).

This sequence belongs to the ubiquitin-conjugating enzyme family. In terms of assembly, interacts with FANCL and BRCA1. Post-translationally, auto-ubiquitinated. Effects of auto-monoubiquitination at Lys-91 and Lys-180 are unclear.

It is found in the nucleus. The catalysed reaction is S-ubiquitinyl-[E1 ubiquitin-activating enzyme]-L-cysteine + [E2 ubiquitin-conjugating enzyme]-L-cysteine = [E1 ubiquitin-activating enzyme]-L-cysteine + S-ubiquitinyl-[E2 ubiquitin-conjugating enzyme]-L-cysteine.. Its pathway is protein modification; protein ubiquitination. Its function is as follows. Accepts ubiquitin from the E1 complex and catalyzes its covalent attachment to other proteins. Catalyzes monoubiquitination. Involved in mitomycin-C (MMC)-induced DNA repair: acts as a specific E2 ubiquitin-conjugating enzyme for the Fanconi anemia complex by associating with E3 ubiquitin-protein ligase FANCL and catalyzing monoubiquitination of FANCD2, a key step in the DNA damage pathway. Also mediates monoubiquitination of FANCL and FANCI. May contribute to ubiquitination and degradation of BRCA1. In vitro able to promote polyubiquitination using all 7 ubiquitin Lys residues, but may prefer 'Lys-11'-, 'Lys-27'-, 'Lys-48'- and 'Lys-63'-linked polyubiquitination. The chain is Ubiquitin-conjugating enzyme E2 T (UBE2T) from Bos taurus (Bovine).